A 1744-amino-acid chain; its full sequence is Myotubularin-related protein 5 (1744 aa).

The uDENN domain occupies 14–150 (DTVAVIVLEE…IRFLTYELVE (137 aa)). The 140-residue stretch at 165–304 (ELGFELIPIS…YYNSLHQRLR (140 aa)) folds into the cDENN domain. The dDENN domain maps to 306–412 (VMFTTTSQED…LTRALPRRKH (107 aa)). A GRAM domain is found at 787–871 (KGNFDPVLAH…LYSMESFKKL (85 aa)). Residues 996–1447 (NAHIRYAVID…PQIHMWPFLA (452 aa)) form the Myotubularin phosphatase domain. The segment covering 1102–1116 (TGSMTGSQQTLHSKA) has biased composition (polar residues). Residues 1102 to 1123 (TGSMTGSQQTLHSKASSNEESS) form a disordered region. Residues 1540 to 1590 (IHELTPFTVGARPVQCCYCTNILTRWSKAVHCKKCRIHVHEGCVNRNITIG) form a Phorbol-ester/DAG-type zinc finger. The region spanning 1643–1743 (PPLCTGYLSK…WKECIEQVIR (101 aa)) is the PH domain.

It belongs to the protein-tyrosine phosphatase family. Non-receptor class myotubularin subfamily.

Its function is as follows. Probably acts as an adapter for other myotubularin-like phosphatases. This chain is Myotubularin-related protein 5, found in Caenorhabditis elegans.